The following is a 319-amino-acid chain: tRNA-cytidine(32) 2-sulfurtransferase (319 aa).

The short motif at 43-48 is the PP-loop motif element; the sequence is SGGKDS. Cys-118, Cys-121, and Cys-209 together coordinate [4Fe-4S] cluster.

Belongs to the TtcA family. Homodimer. Requires Mg(2+) as cofactor. The cofactor is [4Fe-4S] cluster.

It is found in the cytoplasm. It catalyses the reaction cytidine(32) in tRNA + S-sulfanyl-L-cysteinyl-[cysteine desulfurase] + AH2 + ATP = 2-thiocytidine(32) in tRNA + L-cysteinyl-[cysteine desulfurase] + A + AMP + diphosphate + H(+). Its pathway is tRNA modification. Its function is as follows. Catalyzes the ATP-dependent 2-thiolation of cytidine in position 32 of tRNA, to form 2-thiocytidine (s(2)C32). The sulfur atoms are provided by the cysteine/cysteine desulfurase (IscS) system. The protein is tRNA-cytidine(32) 2-sulfurtransferase of Neisseria meningitidis serogroup A / serotype 4A (strain DSM 15465 / Z2491).